The following is a 346-amino-acid chain: MAEACRVRRMKLGSQGLEVSAQGLGCMALSARYGAPKPETDAIALLHHAINSGVTFFDTSDMYGPETNELLLGKALKDGVKEKVELATKFGFFIVEGEISEVRGDPEYVRAACEASLKRLDIACIDLYYQHRIDTRVPIEITMRELKKLVEEGKIKYIGLSEASASTIRRAHAVHPITAVQIEWSLWSRDAEEDIIPICRELGIGIVAYSPLGRGFLAAGPKLAENLENDDFRKTLPRFQQENVDHNKILFEKVSAMAEKKGCTPAQLALAWVHHQGDDVCPIPGTTKIENLNQNIRALSVKLTPEEISELDSLAKPESVKGERYMASMSTFKNSNTPPLSSWKAT.

Tyr-63 serves as the catalytic Proton donor. Substrate is bound at residue His-131. Position 210–220 (210–220 (SPLGRGFLAAG)) interacts with NADP(+).

This sequence belongs to the aldo/keto reductase family. Aldo/keto reductase 13 subfamily.

In Arabidopsis thaliana (Mouse-ear cress), this protein is Probable aldo-keto reductase 2 (AGD2).